A 460-amino-acid polypeptide reads, in one-letter code: Gastric inhibitory polypeptide receptor (460 aa).

The signal sequence occupies residues 1–18 (MPLRLLLLLLWLWGLQWA). Topologically, residues 19 to 134 (ETDSEGQTTT…DQTLILERLQ (116 aa)) are extracellular. 3 disulfides stabilise this stretch: Cys42–Cys66, Cys57–Cys99, and Cys80–Cys114. 3 N-linked (GlcNAc...) asparagine glycosylation sites follow: Asn58, Asn68, and Asn73. A helical transmembrane segment spans residues 135–155 (IMYTVGYSLSLTTLLLALLIL). Residues 156–166 (SLFRRLHCTRN) are Cytoplasmic-facing. A helical transmembrane segment spans residues 167–185 (YIHMNLFTSFMLRAAAILT). The Extracellular segment spans residues 186 to 222 (RDQLLPPLGPYTGDQAPTPWNQALAACRTAQIMTQYC). Residues 223–243 (VGANYTWLLVEGVYLHHLLVI) form a helical membrane-spanning segment. The Cytoplasmic portion of the chain corresponds to 244-255 (VGRSEKGHFRCY). The chain crosses the membrane as a helical span at residues 256–276 (LLLGWGAPALFVIPWVIVRYL). The Extracellular segment spans residues 277 to 297 (RENTQCWERNEVKAIWWIIRT). A helical membrane pass occupies residues 298 to 318 (PILITILINFLIFIRILGILV). Residues 319 to 337 (SKLRTRQMRCPDYRLRLAR) lie on the Cytoplasmic side of the membrane. A helical transmembrane segment spans residues 338–358 (STLTLVPLLGVHEVVFAPVTE). Residues 359-370 (EQVEGSLRFAKL) are Extracellular-facing. A helical membrane pass occupies residues 371–391 (AFEIFLSSFQGFLVSVLYCFI). Residues 392–460 (NKEVQSEIRQ…PGDEVLESYC (69 aa)) are Cytoplasmic-facing.

This sequence belongs to the G-protein coupled receptor 2 family. In terms of assembly, may form homodimers and heterodimers with GLP1R. Post-translationally, N-glycosylation is required for cell surface expression and lengthens receptor half-life by preventing degradation in the ER.

It is found in the cell membrane. In terms of biological role, this is a receptor for GIP. The activity of this receptor is mediated by G proteins which activate adenylyl cyclase. The polypeptide is Gastric inhibitory polypeptide receptor (Gipr) (Mus musculus (Mouse)).